The sequence spans 1282 residues: Indigoidine synthase (1282 aa).

The interval Ala-24–Leu-379 is adenylation. The 76-residue stretch at Ala-937–Val-1012 folds into the Carrier domain. At Ser-972 the chain carries O-(pantetheine 4'-phosphoryl)serine. A thioesterase region spans residues Arg-1030–Glu-1138.

It belongs to the ATP-dependent AMP-binding enzyme family. Pantetheine 4'-phosphate is required as a cofactor.

The enzyme catalyses 2 FMN + 2 L-glutamine + 2 ATP + O2 = indigoidine + 2 FMNH2 + 2 AMP + 2 diphosphate + 2 H2O. It carries out the reaction FMN + L-glutamine + ATP = 3-amino-1,5-dihydropyridine-2,6-dione + FMNH2 + AMP + diphosphate. It catalyses the reaction 2 3-amino-1,5-dihydropyridine-2,6-dione + O2 = indigoidine + 2 H2O. Its pathway is pigment biosynthesis. Its function is as follows. Nonribosomal peptide synthetase involved in the biosynthesis of the blue pigment indigoidine. Catalyzes the synthesis of the blue pigment using L-Gln as a substrate. Two glutamine molecules are cyclized and oxidized to form indigoidine. This chain is Indigoidine synthase, found in Streptomyces lavendulae.